Reading from the N-terminus, the 227-residue chain is Cytidylate kinase (227 aa).

An ATP-binding site is contributed by 12–20; that stretch reads GPSGAGKGT.

This sequence belongs to the cytidylate kinase family. Type 1 subfamily.

It localises to the cytoplasm. It catalyses the reaction CMP + ATP = CDP + ADP. The catalysed reaction is dCMP + ATP = dCDP + ADP. This Marinomonas sp. (strain MWYL1) protein is Cytidylate kinase.